Here is a 434-residue protein sequence, read N- to C-terminus: RNA polymerase II holoenzyme cyclin-like subunit (434 aa).

The 133-residue stretch at 23–155 (EARRRVLLLE…LIEEMDSYLL (133 aa)) folds into the Cyclin N-terminal domain. Residues 248–278 (GSSTNPININNNNNTNTSNNNGTTSTTTTTT) show a composition bias toward low complexity. Disordered stretches follow at residues 248 to 292 (GSST…DNTE), 301 to 320 (LTKS…DIDN), and 330 to 362 (QIQN…GQIS). Positions 330–359 (QIQNQTQHQHQESTHNNTSSTNTGRNGING) are enriched in low complexity.

It belongs to the cyclin family. Cyclin C subfamily. In terms of assembly, component of the SRB8-11 complex, a regulatory module of the Mediator complex.

The protein resides in the nucleus. Its function is as follows. Component of the SRB8-11 complex. The SRB8-11 complex is a regulatory module of the Mediator complex which is itself involved in regulation of basal and activated RNA polymerase II-dependent transcription. The SRB8-11 complex may be involved in the transcriptional repression of a subset of genes regulated by Mediator. It may inhibit the association of the Mediator complex with RNA polymerase II to form the holoenzyme complex. The SRB8-11 complex phosphorylates the C-terminal domain (CTD) of the largest subunit of RNA polymerase II. This chain is RNA polymerase II holoenzyme cyclin-like subunit (SSN8), found in Candida albicans (strain SC5314 / ATCC MYA-2876) (Yeast).